The chain runs to 374 residues: Coiled-coil domain-containing protein 89 (374 aa).

The tract at residues 1–38 is disordered; the sequence is MRAPMPQKEQAPRMDTSPPEERLEKQNEKLNNQEEEME. Threonine 16 carries the post-translational modification Phosphothreonine. Residues 19-32 are compositionally biased toward basic and acidic residues; that stretch reads PEERLEKQNEKLNN. Positions 19–350 form a coiled coil; the sequence is PEERLEKQNE…YDELRLQSEA (332 aa).

Belongs to the CCDC89 family. In terms of assembly, interacts with HEY1.

The protein localises to the cytoplasm. Its subcellular location is the nucleus. The polypeptide is Coiled-coil domain-containing protein 89 (CCDC89) (Macaca fascicularis (Crab-eating macaque)).